Consider the following 430-residue polypeptide: tRNA(Ile)-lysidine synthase (430 aa).

An ATP-binding site is contributed by 24 to 29 (SGGLDS).

Belongs to the tRNA(Ile)-lysidine synthase family.

It localises to the cytoplasm. It carries out the reaction cytidine(34) in tRNA(Ile2) + L-lysine + ATP = lysidine(34) in tRNA(Ile2) + AMP + diphosphate + H(+). Its function is as follows. Ligates lysine onto the cytidine present at position 34 of the AUA codon-specific tRNA(Ile) that contains the anticodon CAU, in an ATP-dependent manner. Cytidine is converted to lysidine, thus changing the amino acid specificity of the tRNA from methionine to isoleucine. This Haemophilus influenzae (strain PittEE) protein is tRNA(Ile)-lysidine synthase.